Here is a 234-residue protein sequence, read N- to C-terminus: Peptidase E (234 aa).

Residues serine 123, aspartate 138, and histidine 160 each act as charge relay system in the active site.

It belongs to the peptidase S51 family.

Its subcellular location is the cytoplasm. The enzyme catalyses Dipeptidase E catalyzes the hydrolysis of dipeptides Asp-|-Xaa. It does not act on peptides with N-terminal Glu, Asn or Gln, nor does it cleave isoaspartyl peptides.. Hydrolyzes dipeptides containing N-terminal aspartate residues. May play a role in allowing the cell to use peptide aspartate to spare carbon otherwise required for the synthesis of the aspartate family of amino acids. The polypeptide is Peptidase E (Pasteurella multocida (strain Pm70)).